We begin with the raw amino-acid sequence, 748 residues long: Chondroadherin-like protein (748 aa).

Positions 1 to 29 (MERPQSSIWVFMLLLFMVLLQSPAWHVAA) are cleaved as a signal peptide. Residues 30–61 (QRCPQTCVCDNSRRHVTCRHQNLTEVPNTIPE) form the LRRNT 1 domain. The N-linked (GlcNAc...) asparagine glycan is linked to asparagine 51. 9 LRR repeats span residues 85–107 (PHLTHLDLRNCQVEMVAEGAFRG), 108–131 (LGRLLLLNLASNRLSTLPQEALDG), 132–155 (LGSLRRLELEGNMLEELRPGTFGA), 156–179 (LGSLTTLNLAHNALVYLPAMAFQG), 181–203 (LRTRWLQLSHNALSVLAPEALAG), 204–227 (LPALRRLSLHHNELQALPGAALSQ), 229–252 (RSLARLELGHNPLTYTGEEDGLAL), 253–275 (PGLRELALDHGSLQALGPRAFAH), and 276–299 (CPRLHTLDLRGNQLTTLPPLQVPG). The LRRCT 1 domain maps to 309 to 357 (NPLWCACHARPLLEWLVRARVRSDGACRGPRRLRGEALDTLRPSDLRCP). Residues 352 to 389 (SDLRCPGDAAAGDGDGDEDEDRPAGPRAPPLRSPHGEA) are disordered. The 35-residue stretch at 394–428 (PCPPACACVAETRHSTCDGRGLQAVPRGFPNDTQL) folds into the LRRNT 2 domain. The cysteines at positions 395 and 410 are disulfide-linked. LRR repeat units lie at residues 423 to 446 (PNDTQLLDLRRNHFPSVPRAAFPG), 448 to 470 (RHLVSLHLQHCGVAELEPGALAG), 471 to 494 (LDRLLYLYLSHNQLSGLSAAALEG), 496 to 518 (PNLGYLYLEHNRFLRIPGTALRA), 519 to 542 (LPTLVSLHLQDNAVDRLAPGDLAG), 544 to 566 (RALRCLYLSGNHITQVSPGALGP), 567 to 590 (ARELEKLHLDRNRLREVPTGALEG), 591 to 614 (LPALKELQLSGNPLRALPDGAFQP), 616 to 639 (GRSLQQLFLNSSDLEQISPRAFSG), and 641 to 665 (GKGLRSLYLHKNQLQSLPAPLGLSG). Asparagine 625 is a glycosylation site (N-linked (GlcNAc...) asparagine). An LRRCT 2 domain is found at 674-722 (NPFHCDCQLLPLHRWLTGLNLRVGATCATPPSVRGQKVKVAAPVFEACP). 2 disulfides stabilise this stretch: cysteine 678/cysteine 721 and cysteine 680/cysteine 700. The interval 728-748 (KAKRTPTSRGSARRTPSLSRH) is disordered. Residues 734-748 (TSRGSARRTPSLSRH) are compositionally biased toward polar residues.

The protein belongs to the small leucine-rich proteoglycan (SLRP) family. SLRP class IV subfamily. In terms of assembly, associates with collagen and binds to collagen fibrils. In terms of tissue distribution, expressed in cartilage, including articular knee cartilage, where it localizes to the extracellular space in the area immediately surrounding the chondrocytes, not detected in any other tissues (at protein level).

The protein resides in the secreted. It localises to the extracellular space. It is found in the extracellular matrix. In terms of biological role, potential negative modulator of chondrocyte differentiation. Inhibits collagen fibrillogenesis in vitro. May influence chondrocyte's differentiation by acting on its cellular collagenous microenvironment. The chain is Chondroadherin-like protein (Chadl) from Mus musculus (Mouse).